Reading from the N-terminus, the 271-residue chain is Undecaprenyl-diphosphatase (271 aa).

8 helical membrane passes run 5–25 (YALF…FLPV), 45–65 (AATF…AVFW), 86–106 (TLSL…GLGI), 114–134 (LFGP…LIIA), 149–169 (ISYK…WPGF), 189–209 (AAEF…GLDL), 226–246 (VGFI…LALI), and 251–271 (FIPF…VFVA).

It belongs to the UppP family.

The protein localises to the cell inner membrane. It catalyses the reaction di-trans,octa-cis-undecaprenyl diphosphate + H2O = di-trans,octa-cis-undecaprenyl phosphate + phosphate + H(+). In terms of biological role, catalyzes the dephosphorylation of undecaprenyl diphosphate (UPP). Confers resistance to bacitracin. This chain is Undecaprenyl-diphosphatase, found in Aeromonas salmonicida (strain A449).